Reading from the N-terminus, the 340-residue chain is MAATPWYFVAVLLTILTSSQGILTTLSQSDGGYKYDYATVPFLAEVFKLIISGLFLWREMRTSSSTTSRITTDWKSVRLFVIPSLIYLIHNNVQFATLTYVDTSTYQIMGNLKIVTTGILFRLFLKRKLSKLQWMAIGLLAVGTTTSQVKGCGEASCDSLFTAPIQGYLLGILSAGLSALAGIYTEFLMKRNNDTLYWQNLQLYTFGSLFNVARLIADDFRHGFEKGPWWQRIFDGYSITTWLVVLNLGSTGLLVSWLMKYADNIVKVYSTSMAMLLTMVASIYLFSFKPTLQLFLGIVICIMSLHMYFAPPHTLVDLPVTNEAHAKTLKQVVVEEKTDS.

Topologically, residues 1-5 (MAATP) are cytoplasmic. Residues 6-26 (WYFVAVLLTILTSSQGILTTL) form a helical membrane-spanning segment. At 27-36 (SQSDGGYKYD) the chain is on the lumenal side. Residues 37-57 (YATVPFLAEVFKLIISGLFLW) form a helical membrane-spanning segment. Residues 58-78 (REMRTSSSTTSRITTDWKSVR) are Cytoplasmic-facing. A helical transmembrane segment spans residues 79-99 (LFVIPSLIYLIHNNVQFATLT). The Lumenal segment spans residues 100–102 (YVD). Residues 103–125 (TSTYQIMGNLKIVTTGILFRLFL) traverse the membrane as a helical segment. Topologically, residues 126–168 (KRKLSKLQWMAIGLLAVGTTTSQVKGCGEASCDSLFTAPIQGY) are cytoplasmic. Residues 169–189 (LLGILSAGLSALAGIYTEFLM) traverse the membrane as a helical segment. Residues 190-200 (KRNNDTLYWQN) lie on the Lumenal side of the membrane. The helical transmembrane segment at 201-217 (LQLYTFGSLFNVARLIA) threads the bilayer. Residues 218–238 (DDFRHGFEKGPWWQRIFDGYS) are Cytoplasmic-facing. The chain crosses the membrane as a helical span at residues 239–259 (ITTWLVVLNLGSTGLLVSWLM). Over 260–282 (KYADNIVKVYSTSMAMLLTMVAS) the chain is Lumenal. The chain crosses the membrane as a helical span at residues 283 to 303 (IYLFSFKPTLQLFLGIVICIM). The Cytoplasmic segment spans residues 304–340 (SLHMYFAPPHTLVDLPVTNEAHAKTLKQVVVEEKTDS).

The protein belongs to the nucleotide-sugar transporter family. CMP-Sialate:CMP antiporter (TC 2.A.7.12) subfamily.

The protein localises to the golgi apparatus membrane. Its function is as follows. Essential protein. Sugar transporter involved in the transport of CMP-sialic acid from the cytoplasm into the Golgi. The chain is CMP-sialic acid transporter 1 from Arabidopsis thaliana (Mouse-ear cress).